The primary structure comprises 902 residues: Protein translocase subunit SecA (902 aa).

ATP-binding positions include Gln87, 105–109 (GEGKT), and Asp512. The disordered stretch occupies residues 847 to 902 (DAERLARQQQLSHLDDQSAAAQEMASQTGDRKIGRNDPCPCGSGKKYKQCHGRLNA). Residues Cys885, Cys887, Cys896, and His897 each contribute to the Zn(2+) site. The segment covering 891 to 902 (KKYKQCHGRLNA) has biased composition (basic residues).

The protein belongs to the SecA family. As to quaternary structure, monomer and homodimer. Part of the essential Sec protein translocation apparatus which comprises SecA, SecYEG and auxiliary proteins SecDF-YajC and YidC. The cofactor is Zn(2+).

The protein localises to the cell inner membrane. It localises to the cytoplasm. It carries out the reaction ATP + H2O + cellular proteinSide 1 = ADP + phosphate + cellular proteinSide 2.. Functionally, part of the Sec protein translocase complex. Interacts with the SecYEG preprotein conducting channel. Has a central role in coupling the hydrolysis of ATP to the transfer of proteins into and across the cell membrane, serving both as a receptor for the preprotein-SecB complex and as an ATP-driven molecular motor driving the stepwise translocation of polypeptide chains across the membrane. In Edwardsiella ictaluri (strain 93-146), this protein is Protein translocase subunit SecA.